Consider the following 335-residue polypeptide: Biotin synthase (335 aa).

The Radical SAM core domain maps to 46–274 (YDIQLASLFS…KSKIRLSAGR (229 aa)). Residues Cys61, Cys65, and Cys68 each contribute to the [4Fe-4S] cluster site. The [2Fe-2S] cluster site is built by Cys105, Cys137, Cys197, and Arg269.

The protein belongs to the radical SAM superfamily. Biotin synthase family. Homodimer. It depends on [4Fe-4S] cluster as a cofactor. [2Fe-2S] cluster serves as cofactor.

The enzyme catalyses (4R,5S)-dethiobiotin + (sulfur carrier)-SH + 2 reduced [2Fe-2S]-[ferredoxin] + 2 S-adenosyl-L-methionine = (sulfur carrier)-H + biotin + 2 5'-deoxyadenosine + 2 L-methionine + 2 oxidized [2Fe-2S]-[ferredoxin]. The protein operates within cofactor biosynthesis; biotin biosynthesis; biotin from 7,8-diaminononanoate: step 2/2. Functionally, catalyzes the conversion of dethiobiotin (DTB) to biotin by the insertion of a sulfur atom into dethiobiotin via a radical-based mechanism. This is Biotin synthase from Prochlorococcus marinus (strain MIT 9215).